We begin with the raw amino-acid sequence, 1394 residues long: Kinesin-like protein KIF27 (1394 aa).

Residues 5–341 (PIKVAVRIRP…LKYANRARNI (337 aa)) enclose the Kinesin motor domain. 84 to 91 (GQTGSGKT) contacts ATP. 2 coiled-coil regions span residues 352–418 (QADR…IEQA) and 498–554 (QKDL…ELAK). Disordered regions lie at residues 559-582 (VPTS…RPHT) and 642-665 (FSDN…RSHS). Residues 571-580 (PDARASEKRP) show a composition bias toward basic and acidic residues. 5 positions are modified to phosphoserine: S643, S646, S672, S675, and S704. Coiled-coil stretches lie at residues 709–891 (LQKL…GQGE), 921–1078 (LDEQ…SIQS), 1118–1152 (NKVI…HELE), and 1186–1226 (DQDG…RLKD). The tract at residues 886–916 (KAGQGEGLNPKAEDQDGFNLNRRKSPFRSGD) is disordered. S999 is modified (phosphoserine). Positions 1267-1280 (TENTKLNGSEREVD) are enriched in basic and acidic residues. Disordered regions lie at residues 1267–1319 (TENT…LQSI) and 1325–1344 (ARPF…PVRS). 2 stretches are compositionally biased toward polar residues: residues 1281–1295 (NSSS…TQQI) and 1309–1319 (IAPSSGQLQSI). 2 positions are modified to phosphoserine: S1365 and S1387.

The protein belongs to the TRAFAC class myosin-kinesin ATPase superfamily. Kinesin family. KIF27 subfamily. In terms of assembly, interacts with STK36.

It localises to the cytoplasm. Its subcellular location is the cytoskeleton. The protein localises to the cell projection. It is found in the cilium. Plays an essential role in motile ciliogenesis. The protein is Kinesin-like protein KIF27 (Kif27) of Mus musculus (Mouse).